The sequence spans 345 residues: L-threonine 3-dehydrogenase (345 aa).

Position 42 (cysteine 42) interacts with Zn(2+). Catalysis depends on charge relay system residues threonine 44 and histidine 47. Zn(2+) contacts are provided by histidine 67, glutamate 68, cysteine 97, cysteine 100, cysteine 103, and cysteine 111. NAD(+) is bound by residues isoleucine 179, aspartate 199, arginine 204, leucine 266–isoleucine 268, and isoleucine 290–tyrosine 291.

Belongs to the zinc-containing alcohol dehydrogenase family. Homotetramer. It depends on Zn(2+) as a cofactor.

Its subcellular location is the cytoplasm. The enzyme catalyses L-threonine + NAD(+) = (2S)-2-amino-3-oxobutanoate + NADH + H(+). The protein operates within amino-acid degradation; L-threonine degradation via oxydo-reductase pathway; glycine from L-threonine: step 1/2. Functionally, catalyzes the NAD(+)-dependent oxidation of L-threonine to 2-amino-3-ketobutyrate. In Rhizobium johnstonii (strain DSM 114642 / LMG 32736 / 3841) (Rhizobium leguminosarum bv. viciae), this protein is L-threonine 3-dehydrogenase.